The following is a 528-amino-acid chain: UDP-glucuronosyltransferase 1A9 (528 aa).

The first 23 residues, 1–23 (MAPVAFPTSFFLCLLLASGLAQA), serve as a signal peptide directing secretion. A glycan (N-linked (GlcNAc...) asparagine) is linked at N69. Position 97 is an N6-succinyllysine (K97). N-linked (GlcNAc...) asparagine glycans are attached at residues N290 and N428. The chain crosses the membrane as a helical span at residues 486–506 (VIGFLLAIVLTVVFIVFKCCA).

The protein belongs to the UDP-glycosyltransferase family. Homodimer. Homooligomer. Interacts with UGT1A1, UGT1A3, UGT1A4, UGT1A6, UGT1A7, UGT1A8 and UGT1A10 to form heterodimers. In terms of tissue distribution, highly expressed in liver and at lower levels in stomach and kidney.

Its subcellular location is the endoplasmic reticulum membrane. It catalyses the reaction glucuronate acceptor + UDP-alpha-D-glucuronate = acceptor beta-D-glucuronoside + UDP + H(+). The enzyme catalyses 2-hydroxy-17beta-estradiol + UDP-alpha-D-glucuronate = 2-hydroxy-17beta-estradiol 3-O-(beta-D-glucuronate) + UDP + H(+). It carries out the reaction 4-hydroxy-17beta-estradiol + UDP-alpha-D-glucuronate = 17beta-estradiol 4-O-(beta-D-glucuronate) + UDP + H(+). The catalysed reaction is 2-hydroxyestrone + UDP-alpha-D-glucuronate = 2-hydroxyestrone 3-O-(beta-D-glucuronate) + UDP + H(+). It catalyses the reaction 4-hydroxyestrone + UDP-alpha-D-glucuronate = estrone 4-O-(beta-D-glucuronate) + UDP + H(+). The enzyme catalyses prunetin + UDP-alpha-D-glucuronate = prunetin-5-O-beta-D-glucuronide + UDP. It carries out the reaction 8-iso-prostaglandin F2alpha + UDP-alpha-D-glucuronate = 8-iso-prostaglandin F2alpha-glucuronide + UDP + H(+). The catalysed reaction is 5-epi-5-F2t-IsoP + UDP-alpha-D-glucuronate = 5-epi-5-F2t-IsoP-glucuronide + UDP + H(+). It catalyses the reaction (5Z,8Z,11Z,14Z)-eicosatetraenoate + UDP-alpha-D-glucuronate = O-[(5Z),(8Z),(11Z),(14Z)-eicosatetraenoyl]-beta-D-glucuronate + UDP. The enzyme catalyses 15-hydroxy-(5Z,8Z,11Z,13E)-eicosatetraenoate + UDP-alpha-D-glucuronate = 15-O-(beta-D-glucuronosyl)-(5Z,8Z,11Z,14Z)-eicosatetraenoate + UDP + H(+). It carries out the reaction prostaglandin B1 + UDP-alpha-D-glucuronate = 15-O-(beta-D-glucuronosyl)-prostaglandin B1 + UDP + H(+). The catalysed reaction is (E)-ferulate + UDP-alpha-D-glucuronate = (E)-4-O-(beta-D-glucuronosyl)-ferulate + UDP + H(+). It catalyses the reaction (E)-ferulate + UDP-alpha-D-glucuronate = (E)-ferulic acid beta-D-glucuronate ester + UDP. The enzyme catalyses candesartan + UDP-alpha-D-glucuronate = candesartan O-beta-D-glucuronoside + UDP. It carries out the reaction SN-38 + UDP-alpha-D-glucuronate = SN-38 O-beta-D-glucuronide + UDP + H(+). The catalysed reaction is mycophenolate + UDP-alpha-D-glucuronate = mycophenolate 7-O-beta-D-glucuronide + UDP + H(+). Functionally, UDP-glucuronosyltransferase (UGT) that catalyzes phase II biotransformation reactions in which lipophilic substrates are conjugated with glucuronic acid to increase the metabolite's water solubility, thereby facilitating excretion into either the urine or bile. Essential for the elimination and detoxification of drugs, xenobiotics and endogenous compounds. Catalyzes the glucuronidation of endogenous estrogen hormones such as estradiol and estrone. Involved in the glucuronidation of arachidonic acid (AA) and AA-derived eicosanoids including 15-HETE, PGB1 and F2-isoprostanes (8-iso-PGF2alpha and 5-epi-5-F2t-IsoP). Glucuronates the phytochemical ferulic acid efficently at both the phenolic or the carboxylic acid group. Also catalyzes the glucuronidation of the isoflavones genistein, daidzein, glycitein, formononetin, biochanin A and prunetin, which are phytoestrogens with anticancer and cardiovascular properties. Involved in the glucuronidation of the AGTR1 angiotensin receptor antagonist caderastan, a drug which can inhibit the effect of angiotensin II. Involved in the biotransformation of 7-ethyl-10-hydroxycamptothecin (SN-38), the pharmacologically active metabolite of the anticancer drug irinotecan. Also metabolizes mycophenolate, an immunosuppressive agent. This chain is UDP-glucuronosyltransferase 1A9, found in Mus musculus (Mouse).